Here is a 534-residue protein sequence, read N- to C-terminus: Probable DNA polymerase epsilon subunit 2 (534 aa).

It belongs to the DNA polymerase epsilon subunit B family. In terms of assembly, consists of four subunits.

It localises to the nucleus. Accessory component of the DNA polymerase epsilon complex. Participates in DNA repair and in chromosomal DNA replication. The protein is Probable DNA polymerase epsilon subunit 2 (pole-2) of Caenorhabditis elegans.